The sequence spans 103 residues: Sec-independent protein translocase protein TatA (103 aa).

Residues M1–A21 form a helical membrane-spanning segment. The interval V42–P103 is disordered. The span at P52–P90 shows a compositional bias: low complexity. Basic and acidic residues predominate over residues Q94–P103.

Belongs to the TatA/E family. The Tat system comprises two distinct complexes: a TatABC complex, containing multiple copies of TatA, TatB and TatC subunits, and a separate TatA complex, containing only TatA subunits. Substrates initially bind to the TatABC complex, which probably triggers association of the separate TatA complex to form the active translocon.

It is found in the cell membrane. Part of the twin-arginine translocation (Tat) system that transports large folded proteins containing a characteristic twin-arginine motif in their signal peptide across membranes. TatA could form the protein-conducting channel of the Tat system. This chain is Sec-independent protein translocase protein TatA, found in Corynebacterium efficiens (strain DSM 44549 / YS-314 / AJ 12310 / JCM 11189 / NBRC 100395).